Here is a 74-residue protein sequence, read N- to C-terminus: UPF0057 membrane protein At4g30660 (74 aa).

Helical transmembrane passes span 4–24 and 37–57; these read NCEILCEIIIAILLPPLGVCF and LVLTILGYVPGIIYAIYVIVF.

It belongs to the UPF0057 (PMP3) family.

The protein localises to the membrane. This is UPF0057 membrane protein At4g30660 from Arabidopsis thaliana (Mouse-ear cress).